The primary structure comprises 173 residues: Cytochrome c-type biogenesis protein CcmE (173 aa).

Topologically, residues 1 to 8 (MMSRKKRR) are cytoplasmic. The helical; Signal-anchor for type II membrane protein transmembrane segment at 9 to 29 (LWIVIACGIGLSTAVALMLFA) threads the bilayer. Topologically, residues 30–173 (FRSSLSFFMS…PAQIEASNNG (144 aa)) are periplasmic. Positions 127 and 131 each coordinate heme. The tract at residues 145-173 (KWNPKFGPPPNAGAWDDKSPAQIEASNNG) is disordered.

Belongs to the CcmE/CycJ family.

Its subcellular location is the cell inner membrane. In terms of biological role, heme chaperone required for the biogenesis of c-type cytochromes. Transiently binds heme delivered by CcmC and transfers the heme to apo-cytochromes in a process facilitated by CcmF and CcmH. The sequence is that of Cytochrome c-type biogenesis protein CcmE from Acidiphilium cryptum (strain JF-5).